The chain runs to 1927 residues: Integrin beta-like protein A (1927 aa).

The N-terminal stretch at 1-20 (MNRILTLFILFISLFIVCEA) is a signal peptide. The Extracellular portion of the chain corresponds to 21–1860 (THFRFGTMSW…KENNNKTVLT (1840 aa)). Asparagine 309 carries N-linked (GlcNAc...) asparagine glycosylation. Residues 425 to 462 (YGEKCDPVDPCVNGESNEGSQGNGKCTCYYGWEGKNCD) form the EGF-like domain. 2 cysteine pairs are disulfide-bonded: cysteine 435/cysteine 450 and cysteine 452/cysteine 461. The VWFA domain occupies 522–709 (EVLVLVDSQP…VLSKAVVKAI (188 aa)). 5 N-linked (GlcNAc...) asparagine glycosylation sites follow: asparagine 1122, asparagine 1516, asparagine 1717, asparagine 1723, and asparagine 1855. Residues 1861 to 1881 (GAIAGAAAGAGLLAAGAWFLL) form a helical membrane-spanning segment. At 1882–1927 (KKSAPPTDAFFGEGAFADGAVSTNPMYEESGRSAINPLYEASSENL) the chain is on the cytoplasmic side.

This sequence belongs to the SIB family. Interacts with talA/talin.

It is found in the membrane. Implicated in cellular adhesion to substrate or phagocytic particles. The sequence is that of Integrin beta-like protein A (sibA) from Dictyostelium discoideum (Social amoeba).